The primary structure comprises 372 residues: CXADR-like membrane protein (372 aa).

The signal sequence occupies residues 1–17 (MSLFFLWLVTYYVGTLG). Ig-like C2-type domains follow at residues 18 to 126 (THTE…VILK) and 134 to 223 (PKCE…VRVT). The Extracellular portion of the chain corresponds to 18–234 (THTEIKRVAE…QYVQSIGMVA (217 aa)). Cystine bridges form between Cys34–Cys110 and Cys152–Cys207. Asn73 and Asn196 each carry an N-linked (GlcNAc...) asparagine glycan. Residues 235–255 (GAVTGIVAGALLIFLLIWLLI) traverse the membrane as a helical segment. The Cytoplasmic segment spans residues 256-372 (RRKSKERYEE…PSQSRAFQTV (117 aa)). The segment covering 263-280 (YEEEDRPNEIREDAEAPR) has biased composition (basic and acidic residues). The interval 263–372 (YEEEDRPNEI…PSQSRAFQTV (110 aa)) is disordered. Composition is skewed to low complexity over residues 287–313 (SSSS…ASRS) and 352–361 (LTKAETTLST). A compositionally biased stretch (polar residues) spans 362 to 372 (MPSQSRAFQTV).

As to expression, predominantly expressed in the white adipose tissue.

The protein resides in the cell junction. Its subcellular location is the tight junction. It is found in the cell membrane. In terms of biological role, may be involved in the cell-cell adhesion. May play a role in adipocyte differentiation and development of obesity. Is required for normal small intestine development. The sequence is that of CXADR-like membrane protein (Clmp) from Rattus norvegicus (Rat).